A 156-amino-acid chain; its full sequence is ATP synthase subunit b (156 aa).

A helical membrane pass occupies residues 7–29 (LFAQMVVFLVLAWFTMKFVWPPL).

Belongs to the ATPase B chain family. In terms of assembly, F-type ATPases have 2 components, F(1) - the catalytic core - and F(0) - the membrane proton channel. F(1) has five subunits: alpha(3), beta(3), gamma(1), delta(1), epsilon(1). F(0) has three main subunits: a(1), b(2) and c(10-14). The alpha and beta chains form an alternating ring which encloses part of the gamma chain. F(1) is attached to F(0) by a central stalk formed by the gamma and epsilon chains, while a peripheral stalk is formed by the delta and b chains.

It localises to the cell inner membrane. Functionally, f(1)F(0) ATP synthase produces ATP from ADP in the presence of a proton or sodium gradient. F-type ATPases consist of two structural domains, F(1) containing the extramembraneous catalytic core and F(0) containing the membrane proton channel, linked together by a central stalk and a peripheral stalk. During catalysis, ATP synthesis in the catalytic domain of F(1) is coupled via a rotary mechanism of the central stalk subunits to proton translocation. Component of the F(0) channel, it forms part of the peripheral stalk, linking F(1) to F(0). The polypeptide is ATP synthase subunit b (Burkholderia multivorans (strain ATCC 17616 / 249)).